The sequence spans 94 residues: uncharacterized protein (94 aa).

A signal peptide spans 1-26; that stretch reads MNDQRDQAVPWATGLAVAGFVAAVIA. Transmembrane regions (helical) follow at residues 42-62 and 71-91; these read LLAV…LWGW and FVLG…ALTL.

Its subcellular location is the cell membrane. This is an uncharacterized protein from Mycobacterium tuberculosis (strain CDC 1551 / Oshkosh).